Consider the following 399-residue polypeptide: Putative gustatory receptor 59e (399 aa).

The Cytoplasmic segment spans residues 1 to 33 (MDSSYWENLLLTINRFLGVYPSGRVGVLRWLHT). A helical membrane pass occupies residues 34–54 (LWSLFLLMYIWTGSIVKCLEF). At 55–65 (TVEIPTIEKLL) the chain is on the extracellular side. Residues 66-86 (YLMEFPGNMATIAILVYYAVL) traverse the membrane as a helical segment. The Cytoplasmic segment spans residues 87–120 (NRPLAHGAELQIERIITGLKGKAKRLVYKRHGQR). Residues 121–141 (TLHLMATTLVFHGLCVLVDVV) form a helical membrane-spanning segment. At 142 to 206 (NYDFEFWTTW…RPPQGSTKLD (65 aa)) the chain is on the extracellular side. A helical transmembrane segment spans residues 207–227 (ACYESAFAVLVDAGGGSALMI). Topologically, residues 228–250 (EEMRYTCNLIEQVHSQFLLRFGL) are cytoplasmic. A helical membrane pass occupies residues 251 to 271 (YLVLNLLNSLVSICVELYLIF). The Extracellular segment spans residues 272 to 282 (NFFETPLWEES). A helical membrane pass occupies residues 283–303 (VLLVYRLLWLAMHGGRIWFIL). At 304–361 (SVNEQILEQKCNLCQLLNELEVCSSRLQRTINRFLLQLQRSIDQPLEACGIVTLDTRS) the chain is on the cytoplasmic side. The chain crosses the membrane as a helical span at residues 362 to 382 (LGGFIGVLMAIVIFLIQIGLG). Asn-383 and Asn-392 each carry an N-linked (GlcNAc...) asparagine glycan. Over 383-399 (NKSLMGVALNRSNWVYV) the chain is Extracellular.

The protein belongs to the insect chemoreceptor superfamily. Gustatory receptor (GR) family. Gr10a subfamily. As to expression, expressed in the adult labellar chemosensory neurons. In larvae, is expressed in neurons of the terminal external chemosensory organ.

The protein resides in the cell membrane. Probable gustatory receptor which mediates acceptance or avoidance behavior, depending on its substrates. This chain is Putative gustatory receptor 59e (Gr59e), found in Drosophila melanogaster (Fruit fly).